We begin with the raw amino-acid sequence, 315 residues long: Borealin (315 aa).

Disordered stretches follow at residues 103-126 (IEGHAPSATGSRNDEEDSSIGASG) and 138-226 (LRST…TPPM). T146 carries the post-translational modification Phosphothreonine. Phosphoserine is present on S152. The span at 153–162 (ARARRARRSR) shows a compositional bias: basic residues. S163 carries the post-translational modification Phosphoserine. The segment covering 178 to 188 (SISSSSSSSRN) has biased composition (low complexity). Position 205 is a phosphoserine (S205). A Phosphothreonine modification is found at T209. Phosphoserine is present on residues S218, S220, and S244.

The protein belongs to the borealin family. Component of the CPC complex. Ubiquitously expressed in the early embryo. Expression is restricted to the ventral nerve cord and brain during later embryonic stages.

It is found in the nucleus. The protein resides in the chromosome. The protein localises to the centromere. It localises to the cytoplasm. Its subcellular location is the cytoskeleton. It is found in the spindle. In terms of biological role, component of the chromosomal passenger complex (CPC), a complex that acts as a key regulator of embryonic mitosis. The CPC complex has essential functions at the centromere for ensuring sister chromatid cohesion, recruitment of the CPC to kinetochores, and chromosome alignment and segregation. There is no function in meiotic histone phosphorylation or spindle formation. The protein is Borealin (borr) of Drosophila melanogaster (Fruit fly).